Here is a 497-residue protein sequence, read N- to C-terminus: Cobyric acid synthase (497 aa).

A GATase cobBQ-type domain is found at 251-443 (DLKIGVVWYP…LHGLFDNDFF (193 aa)). The active-site Nucleophile is C333. Residue H435 is part of the active site.

Belongs to the CobB/CobQ family. CobQ subfamily.

The protein operates within cofactor biosynthesis; adenosylcobalamin biosynthesis. Functionally, catalyzes amidations at positions B, D, E, and G on adenosylcobyrinic A,C-diamide. NH(2) groups are provided by glutamine, and one molecule of ATP is hydrogenolyzed for each amidation. This is Cobyric acid synthase from Carboxydothermus hydrogenoformans (strain ATCC BAA-161 / DSM 6008 / Z-2901).